The primary structure comprises 151 residues: Decarboxylase nsrE (151 aa).

In terms of domain architecture, EthD spans 31–126 (AGMTEEDYHN…VGDHENFADT (96 aa)).

It belongs to the tpcK family.

It catalyses the reaction atrochrysone carboxylate + H(+) = atrochrysone + CO2. It functions in the pathway secondary metabolite biosynthesis. Decarboxylase; part of the gene cluster that mediates the biosynthesis of the tetrahydroxanthone dimer neosartorin, which exhibits antibacterial activity. The two different monomeric units appear to be synthesized by the same set of enzymes, among which the Baeyer-Villiger monooxygenase nsrF is the key enzyme for the divergence of the biosynthetic routes. The pathway begins with the synthesis of atrochrysone thioester by the polyketide synthase nsrB. The atrochrysone carboxyl ACP thioesterase nsrC then breaks the thioester bond and releases the atrochrysone carboxylic acid from AacuL. Atrochrysone carboxylic acid is decarboxylated by the decarboxylase nsrE, and oxidized by the anthrone oxygenase nsrD to yield emodin. Emodin is then reduced to emodin hydroquinone by the oxidoreductase nsrR. A-ring reduction by the short chain dehydrogenase nsrJ, dehydration by the scytalone dehydratase-like protein nsrI and probable spontaneous re-oxidation, results in overall deoxygenation to chrysophanol. The Baeyer-Villiger monooxygenase nsrF accepts chrysophanol as a substrate to insert one oxygen atom at two different positions to yield the precursors of both monomric units. NsrF is promiscuous/flexible in interacting with the 2 (non methylated and methylated) aromatic rings of chrysophanol, thus diverging the biosynthetic pathway at this point. After the hydrolysis of the lactones, methylesterification by the methyltransferase nsrG yields respectively moniliphenone and 2,2',6'-trihydroxy-4-methyl-6-methoxya-cyldiphenylmethanone. The next steps are the hydroxylation by the FAD-dependent monooxygenase nsrK, followed by isomerization by the monooxygenase nsrQ. The short chain dehydrogenase/reductase nsrO then catalyzes the C-5 ketoreduction to give the xanthone skeleton of blennolide C and 5-acetylblennolide A. The acetyltransferase nsrL has a strict substrate specificity and uses only blennolide A but not blennolide C to yield 5-acetylblennolide A as the single-acetylated product. In the final step of the biosynthesis, the heterodimerization of the 2 xanthones, blennolide C and 5-acetylblennolide A, is catalyzed by the cytochrome P450 monooxygenase nsrP. NsrP can utilize at least three different xanthones as its substrates to perform the dimerization reaction. This is Decarboxylase nsrE from Aspergillus novofumigatus (strain IBT 16806).